An 875-amino-acid chain; its full sequence is Phosphoenolpyruvate carboxylase (875 aa).

Active-site residues include histidine 137 and lysine 542.

Belongs to the PEPCase type 1 family. Mg(2+) is required as a cofactor.

The catalysed reaction is oxaloacetate + phosphate = phosphoenolpyruvate + hydrogencarbonate. Functionally, forms oxaloacetate, a four-carbon dicarboxylic acid source for the tricarboxylic acid cycle. This Pseudomonas putida (strain ATCC 47054 / DSM 6125 / CFBP 8728 / NCIMB 11950 / KT2440) protein is Phosphoenolpyruvate carboxylase.